The primary structure comprises 175 residues: Cuticle protein 16.5, isoform A (175 aa).

19 repeat units span residues 17–20 (AAPA), 25–28 (AAPA), 31–34 (AAPA), 38–41 (AAPA), 44–47 (AAPA), 51–54 (AAPA), 57–60 (AAPA), 64–67 (AAPA), 70–73 (AAPA), 77–80 (AAPA), 83–86 (AAPA), 91–94 (AAPA), 99–102 (AAPA), 106–109 (AAPA), 134–137 (AAPA), 144–147 (AAPA), 151–154 (AAPA), 158–161 (AAPA), and 165–168 (AAPA).

Component of the cuticle of migratory locust which contains more than 100 different structural proteins. This is Cuticle protein 16.5, isoform A from Locusta migratoria (Migratory locust).